Here is a 527-residue protein sequence, read N- to C-terminus: Bifunctional purine biosynthesis protein PurH (527 aa).

An MGS-like domain is found at 1 to 149 (MASDFLPVRR…KNFARVAVAT (149 aa)).

It belongs to the PurH family.

It carries out the reaction (6R)-10-formyltetrahydrofolate + 5-amino-1-(5-phospho-beta-D-ribosyl)imidazole-4-carboxamide = 5-formamido-1-(5-phospho-D-ribosyl)imidazole-4-carboxamide + (6S)-5,6,7,8-tetrahydrofolate. The catalysed reaction is IMP + H2O = 5-formamido-1-(5-phospho-D-ribosyl)imidazole-4-carboxamide. It functions in the pathway purine metabolism; IMP biosynthesis via de novo pathway; 5-formamido-1-(5-phospho-D-ribosyl)imidazole-4-carboxamide from 5-amino-1-(5-phospho-D-ribosyl)imidazole-4-carboxamide (10-formyl THF route): step 1/1. It participates in purine metabolism; IMP biosynthesis via de novo pathway; IMP from 5-formamido-1-(5-phospho-D-ribosyl)imidazole-4-carboxamide: step 1/1. This Xanthomonas oryzae pv. oryzae (strain MAFF 311018) protein is Bifunctional purine biosynthesis protein PurH.